Here is a 202-residue protein sequence, read N- to C-terminus: Probable 1-Cys peroxiredoxin (202 aa).

In terms of domain architecture, Thioredoxin spans 1 to 148 (STHGKIRIHD…VVRAVDSLLT (148 aa)). Cysteine 30 serves as the catalytic Cysteine sulfenic acid (-SOH) intermediate. The Bipartite nuclear localization signal motif lies at 178–201 (KKLFPQGFETKDLPSKKGYLRFTK).

The protein belongs to the peroxiredoxin family. Prx6 subfamily. Embryos.

It is found in the nucleus. The protein resides in the cytoplasm. The catalysed reaction is a hydroperoxide + [thioredoxin]-dithiol = an alcohol + [thioredoxin]-disulfide + H2O. Thiol-specific peroxidase that catalyzes the reduction of hydrogen peroxide and organic hydroperoxides to water and alcohols, respectively. Seems to contribute to the inhibition of germination during stress. In Bromus secalinus (Rye brome), this protein is Probable 1-Cys peroxiredoxin.